Consider the following 189-residue polypeptide: Ornithine decarboxylase antizyme 2 (189 aa).

A Phosphoserine modification is found at Ser186.

The protein belongs to the ODC antizyme family. As to quaternary structure, interacts with ODC1 and thereby sterically blocks ODC homodimerization. Interacts with AZIN2; this interaction disrupts the interaction between the antizyme and ODC1.

It is found in the nucleus. Functionally, ornithine decarboxylase (ODC) antizyme protein that negatively regulates ODC activity and intracellular polyamine biosynthesis and uptake in response to increased intracellular polyamine levels. Binds to ODC monomers, inhibiting the assembly of the functional ODC homodimers. Does not target the ODC monomers for degradation, which allows a protein synthesis-independent restoration of ODC activity. Involved in the translocation of AZIN2 from ER-Golgi intermediate compartment (ERGIC) to the cytosol. The sequence is that of Ornithine decarboxylase antizyme 2 (Oaz2) from Mus musculus (Mouse).